A 135-amino-acid chain; its full sequence is ATP synthase epsilon chain (135 aa).

Residues 84–107 (SLSEEKQSEEQKQRLERAKKALSS) form a disordered region. The span at 86–102 (SEEKQSEEQKQRLERAK) shows a compositional bias: basic and acidic residues.

Belongs to the ATPase epsilon chain family. F-type ATPases have 2 components, CF(1) - the catalytic core - and CF(0) - the membrane proton channel. CF(1) has five subunits: alpha(3), beta(3), gamma(1), delta(1), epsilon(1). CF(0) has three main subunits: a, b and c.

Its subcellular location is the cell membrane. Its function is as follows. Produces ATP from ADP in the presence of a proton gradient across the membrane. The chain is ATP synthase epsilon chain from Elusimicrobium minutum (strain Pei191).